Reading from the N-terminus, the 378-residue chain is MTDKKVIVLAAGGTGGHLFPAEAVAVELRQRGYDVHLVTDERAQRFVRCFDEEHIHIISSATFTRRHPFSLIKTFWMLLKGMGQSLALFYKLCPVLVGGFGGYPTFPPLIVAAFMRRVTFIHEQNAVMGRANRVLAVFVSAIAGGLLSQNNRYAHKTVLTGNPVRDVVLNAAEIPYYPSEGEKPFHFLIFGGSQGASFFSRIVPEAIALLDDNIRQRLRIVQQVRGDTEELIKIYRQMDVQAEVAPFFDDMAERMARSQFILSRAGASSVCEIAVIGRPALLIPYPHALDHDQAANAALLARVGGAQIISEKDLNAQRLASLLTEAFCAPHLLEKQALAAKKVGQPYATRRLADMAEALIVGRSLSDVKEEFFDENAA.

UDP-N-acetyl-alpha-D-glucosamine is bound by residues 14 to 16, Asn-125, Arg-165, Ser-193, and Gln-293; that span reads TGG.

This sequence belongs to the glycosyltransferase 28 family. MurG subfamily.

It is found in the cell inner membrane. It carries out the reaction di-trans,octa-cis-undecaprenyl diphospho-N-acetyl-alpha-D-muramoyl-L-alanyl-D-glutamyl-meso-2,6-diaminopimeloyl-D-alanyl-D-alanine + UDP-N-acetyl-alpha-D-glucosamine = di-trans,octa-cis-undecaprenyl diphospho-[N-acetyl-alpha-D-glucosaminyl-(1-&gt;4)]-N-acetyl-alpha-D-muramoyl-L-alanyl-D-glutamyl-meso-2,6-diaminopimeloyl-D-alanyl-D-alanine + UDP + H(+). It participates in cell wall biogenesis; peptidoglycan biosynthesis. Functionally, cell wall formation. Catalyzes the transfer of a GlcNAc subunit on undecaprenyl-pyrophosphoryl-MurNAc-pentapeptide (lipid intermediate I) to form undecaprenyl-pyrophosphoryl-MurNAc-(pentapeptide)GlcNAc (lipid intermediate II). In Bartonella henselae (strain ATCC 49882 / DSM 28221 / CCUG 30454 / Houston 1) (Rochalimaea henselae), this protein is UDP-N-acetylglucosamine--N-acetylmuramyl-(pentapeptide) pyrophosphoryl-undecaprenol N-acetylglucosamine transferase.